A 218-amino-acid chain; its full sequence is Small ribosomal subunit protein mS34 (218 aa).

The segment at 178 to 218 (RQKNGDPSTEEPMLSLERIRTDPWDYPENQEAKKKTKGTAV) is disordered.

This sequence belongs to the mitochondrion-specific ribosomal protein mS34 family. As to quaternary structure, component of the mitochondrial ribosome small subunit (28S) which comprises a 12S rRNA and about 30 distinct proteins.

It is found in the mitochondrion. In terms of biological role, required for mitochondrial translation, plays a role in maintaining the stability of the small ribosomal subunit and the 12S rRNA that are required for mitoribosome formation. This chain is Small ribosomal subunit protein mS34, found in Bos taurus (Bovine).